A 480-amino-acid chain; its full sequence is Siroheme synthase 2 (480 aa).

Residues 1–202 form a precorrin-2 dehydrogenase /sirohydrochlorin ferrochelatase region; it reads MDYLPMFARL…QDWQSAETWL (202 aa). NAD(+)-binding positions include 22 to 23 and 43 to 44; these read EV and PE. The residue at position 126 (serine 126) is a Phosphoserine. The tract at residues 214–480 is uroporphyrinogen-III C-methyltransferase; it reads GEVVLVGAGP…GCDLKLVNLA (267 aa). Proline 223 lines the S-adenosyl-L-methionine pocket. Aspartate 246 functions as the Proton acceptor in the catalytic mechanism. Lysine 268 serves as the catalytic Proton donor. Residues 299 to 301, 329 to 330, methionine 381, and glycine 410 each bind S-adenosyl-L-methionine; these read GGD and TA.

The protein in the N-terminal section; belongs to the precorrin-2 dehydrogenase / sirohydrochlorin ferrochelatase family. It in the C-terminal section; belongs to the precorrin methyltransferase family.

The enzyme catalyses uroporphyrinogen III + 2 S-adenosyl-L-methionine = precorrin-2 + 2 S-adenosyl-L-homocysteine + H(+). It carries out the reaction precorrin-2 + NAD(+) = sirohydrochlorin + NADH + 2 H(+). The catalysed reaction is siroheme + 2 H(+) = sirohydrochlorin + Fe(2+). It participates in cofactor biosynthesis; adenosylcobalamin biosynthesis; precorrin-2 from uroporphyrinogen III: step 1/1. Its pathway is cofactor biosynthesis; adenosylcobalamin biosynthesis; sirohydrochlorin from precorrin-2: step 1/1. The protein operates within porphyrin-containing compound metabolism; siroheme biosynthesis; precorrin-2 from uroporphyrinogen III: step 1/1. It functions in the pathway porphyrin-containing compound metabolism; siroheme biosynthesis; siroheme from sirohydrochlorin: step 1/1. It participates in porphyrin-containing compound metabolism; siroheme biosynthesis; sirohydrochlorin from precorrin-2: step 1/1. Functionally, multifunctional enzyme that catalyzes the SAM-dependent methylations of uroporphyrinogen III at position C-2 and C-7 to form precorrin-2 via precorrin-1. Then it catalyzes the NAD-dependent ring dehydrogenation of precorrin-2 to yield sirohydrochlorin. Finally, it catalyzes the ferrochelation of sirohydrochlorin to yield siroheme. The polypeptide is Siroheme synthase 2 (Aeromonas salmonicida (strain A449)).